The following is a 155-amino-acid chain: SsrA-binding protein (155 aa).

A compositionally biased stretch (basic and acidic residues) spans Asp123–Gln142. Residues Asp123–Thr155 form a disordered region. Over residues Leu143–Thr155 the composition is skewed to basic residues.

Belongs to the SmpB family.

The protein resides in the cytoplasm. Required for rescue of stalled ribosomes mediated by trans-translation. Binds to transfer-messenger RNA (tmRNA), required for stable association of tmRNA with ribosomes. tmRNA and SmpB together mimic tRNA shape, replacing the anticodon stem-loop with SmpB. tmRNA is encoded by the ssrA gene; the 2 termini fold to resemble tRNA(Ala) and it encodes a 'tag peptide', a short internal open reading frame. During trans-translation Ala-aminoacylated tmRNA acts like a tRNA, entering the A-site of stalled ribosomes, displacing the stalled mRNA. The ribosome then switches to translate the ORF on the tmRNA; the nascent peptide is terminated with the 'tag peptide' encoded by the tmRNA and targeted for degradation. The ribosome is freed to recommence translation, which seems to be the essential function of trans-translation. In Methylibium petroleiphilum (strain ATCC BAA-1232 / LMG 22953 / PM1), this protein is SsrA-binding protein.